A 240-amino-acid polypeptide reads, in one-letter code: Phosphoribosylaminoimidazole-succinocarboxamide synthase (240 aa).

It belongs to the SAICAR synthetase family.

The enzyme catalyses 5-amino-1-(5-phospho-D-ribosyl)imidazole-4-carboxylate + L-aspartate + ATP = (2S)-2-[5-amino-1-(5-phospho-beta-D-ribosyl)imidazole-4-carboxamido]succinate + ADP + phosphate + 2 H(+). It participates in purine metabolism; IMP biosynthesis via de novo pathway; 5-amino-1-(5-phospho-D-ribosyl)imidazole-4-carboxamide from 5-amino-1-(5-phospho-D-ribosyl)imidazole-4-carboxylate: step 1/2. This is Phosphoribosylaminoimidazole-succinocarboxamide synthase from Neorickettsia sennetsu (strain ATCC VR-367 / Miyayama) (Ehrlichia sennetsu).